A 420-amino-acid chain; its full sequence is Deoxyribodipyrimidine photo-lyase (420 aa).

Residues 2–124 enclose the Photolyase/cryptochrome alpha/beta domain; the sequence is GPLLVWHRGD…PLHLLPAPHL (123 aa). The segment at 147–176 is disordered; that stretch reads APPLPPPEALPKGPEEGEIPREDPGLPLPE. Positions 159 to 170 are enriched in basic and acidic residues; the sequence is GPEEGEIPREDP. Tyrosine 197 provides a ligand contact to FAD. A DNA-binding site is contributed by arginine 201. Residues 209-213, tryptophan 241, arginine 248, asparagine 310, and 341-343 contribute to the FAD site; these read GSRLS and DGD. 2 interaction with DNA regions span residues 244–251 and 310–311; these read ELLWRDFS and NR. Glutamine 373 contributes to the DNA binding site.

Belongs to the DNA photolyase class-1 family. Monomer. It depends on FAD as a cofactor.

It catalyses the reaction cyclobutadipyrimidine (in DNA) = 2 pyrimidine residues (in DNA).. Functionally, involved in repair of UV radiation-induced DNA damage. Catalyzes the light-dependent monomerization (300-600 nm) of cyclobutyl pyrimidine dimers (in cis-syn configuration), which are formed between adjacent bases on the same DNA strand upon exposure to ultraviolet radiation. This chain is Deoxyribodipyrimidine photo-lyase (phr), found in Thermus thermophilus (strain ATCC 27634 / DSM 579 / HB8).